The primary structure comprises 360 residues: Outer membrane protein P2 (360 aa).

The signal sequence occupies residues 1–20 (MKKTLAALIVGAFAASAANA).

The protein belongs to the Gram-negative porin family. As to quaternary structure, homotrimer.

It is found in the cell outer membrane. Forms pores that allow passive diffusion of small molecules across the outer membrane. This Haemophilus influenzae protein is Outer membrane protein P2 (ompP2).